Consider the following 160-residue polypeptide: Peptide deformylase 1 (160 aa).

2 residues coordinate Fe cation: Cys90 and His132. Residue Glu133 is part of the active site. Residue His136 coordinates Fe cation.

The protein belongs to the polypeptide deformylase family. Fe(2+) is required as a cofactor.

It catalyses the reaction N-terminal N-formyl-L-methionyl-[peptide] + H2O = N-terminal L-methionyl-[peptide] + formate. In terms of biological role, removes the formyl group from the N-terminal Met of newly synthesized proteins. Requires at least a dipeptide for an efficient rate of reaction. N-terminal L-methionine is a prerequisite for activity but the enzyme has broad specificity at other positions. This Bacillus subtilis (strain 168) protein is Peptide deformylase 1 (defA).